The sequence spans 98 residues: NADH-ubiquinone oxidoreductase chain 4L (98 aa).

Helical transmembrane passes span 2–22, 29–49, and 61–81; these read PSISINITLAFTTALLGMLMF, SLLCLEGMMLSMFILSTLIIL, and ILLLVFAACEAAIGLALLVMI.

It belongs to the complex I subunit 4L family. Core subunit of respiratory chain NADH dehydrogenase (Complex I) which is composed of 45 different subunits.

The protein localises to the mitochondrion inner membrane. The catalysed reaction is a ubiquinone + NADH + 5 H(+)(in) = a ubiquinol + NAD(+) + 4 H(+)(out). Its function is as follows. Core subunit of the mitochondrial membrane respiratory chain NADH dehydrogenase (Complex I) which catalyzes electron transfer from NADH through the respiratory chain, using ubiquinone as an electron acceptor. Part of the enzyme membrane arm which is embedded in the lipid bilayer and involved in proton translocation. The sequence is that of NADH-ubiquinone oxidoreductase chain 4L (MT-ND4L) from Mirza coquereli (Coquerel's giant mouse lemur).